Here is a 390-residue protein sequence, read N- to C-terminus: Putative transposase y4qE (390 aa).

This sequence belongs to the transposase IS1111A/IS1328/IS1533 family.

The polypeptide is Putative transposase y4qE (Sinorhizobium fredii (strain NBRC 101917 / NGR234)).